Here is a 210-residue protein sequence, read N- to C-terminus: MTLAKDIASHLLKIQAVYLKPEEPFTWASGIKSPIYTDNRVTLAYPETRTLIENGFVEAIKEAFPEVEVIAGTATAGIPHGAIIADKMDLPFAYIRSKPKDHGAGNQIEGRVAQGQKMVVVEDLISTGGSVLEAVAAAKREGADVLGVVAIFSYQLPKADKNFADAGVKLVTLSNYSDLIHLAQEEGYITPEGLYLLKRFKEDQENWQEG.

Residues arginine 96, lysine 100, histidine 102, and 122–130 each bind 5-phospho-alpha-D-ribose 1-diphosphate; that span reads EDLISTGGS. Serine 126 provides a ligand contact to orotate.

The protein belongs to the purine/pyrimidine phosphoribosyltransferase family. PyrE subfamily. In terms of assembly, homodimer. Requires Mg(2+) as cofactor.

It catalyses the reaction orotidine 5'-phosphate + diphosphate = orotate + 5-phospho-alpha-D-ribose 1-diphosphate. Its pathway is pyrimidine metabolism; UMP biosynthesis via de novo pathway; UMP from orotate: step 1/2. Catalyzes the transfer of a ribosyl phosphate group from 5-phosphoribose 1-diphosphate to orotate, leading to the formation of orotidine monophosphate (OMP). The protein is Orotate phosphoribosyltransferase of Streptococcus pneumoniae (strain ATCC BAA-255 / R6).